Here is an 820-residue protein sequence, read N- to C-terminus: Penicillin-binding protein 1A (820 aa).

Positions 1-120 are disordered; sequence MNSDGRHHQS…PAGRLPQPRV (120 aa). Basic and acidic residues predominate over residues 41 to 53; the sequence is TDDRSAPHADSIE. A helical transmembrane segment spans residues 139–159; it reads LTAAVVILLPMVTFTMAYLIV. The transglycosylase stretch occupies residues 180 to 360; sequence GSEIAKIVPP…RWNWVLDGMV (181 aa). Residue Glu213 is the Proton donor; for transglycosylase activity of the active site. The segment at 453 to 743 is transpeptidase; sequence AVVSIDPHNG…PSDIWKATMD (291 aa). The Acyl-ester intermediate; for transpeptidase activity role is filled by Ser487. Low complexity predominate over residues 792-804; it reads ITIPIGPPTTITL. The interval 792–820 is disordered; that stretch reads ITIPIGPPTTITLAPPPPAPPAATPTPPP. A compositionally biased stretch (pro residues) spans 805-820; it reads APPPPAPPAATPTPPP.

In the N-terminal section; belongs to the glycosyltransferase 51 family. This sequence in the C-terminal section; belongs to the transpeptidase family. In terms of assembly, interacts with RipA via its transpeptidase domain (residues 561-820).

The protein localises to the cell membrane. It carries out the reaction [GlcNAc-(1-&gt;4)-Mur2Ac(oyl-L-Ala-gamma-D-Glu-L-Lys-D-Ala-D-Ala)](n)-di-trans,octa-cis-undecaprenyl diphosphate + beta-D-GlcNAc-(1-&gt;4)-Mur2Ac(oyl-L-Ala-gamma-D-Glu-L-Lys-D-Ala-D-Ala)-di-trans,octa-cis-undecaprenyl diphosphate = [GlcNAc-(1-&gt;4)-Mur2Ac(oyl-L-Ala-gamma-D-Glu-L-Lys-D-Ala-D-Ala)](n+1)-di-trans,octa-cis-undecaprenyl diphosphate + di-trans,octa-cis-undecaprenyl diphosphate + H(+). The catalysed reaction is Preferential cleavage: (Ac)2-L-Lys-D-Ala-|-D-Ala. Also transpeptidation of peptidyl-alanyl moieties that are N-acyl substituents of D-alanine.. It participates in cell wall biogenesis; peptidoglycan biosynthesis. Cell wall formation. Synthesis of cross-linked peptidoglycan from the lipid intermediates. The enzyme has a penicillin-insensitive transglycosylase N-terminal domain (formation of linear glycan strands) and a penicillin-sensitive transpeptidase C-terminal domain (cross-linking of the peptide subunits). Has little peptidoglycan hydrolytic activity; however it inhibits the synergistic peptidoglycan hydrolysis of RipA plus RpfB. The sequence is that of Penicillin-binding protein 1A (ponA1) from Mycobacterium tuberculosis (strain ATCC 25618 / H37Rv).